Reading from the N-terminus, the 629-residue chain is tRNA uridine 5-carboxymethylaminomethyl modification enzyme MnmG (629 aa).

FAD is bound by residues 13–18, V125, and S180; that span reads GGGHAG. Position 273–287 (273–287) interacts with NAD(+); sequence GPRYCPSIEDKVMRF. Q370 is an FAD binding site.

The protein belongs to the MnmG family. Homodimer. Heterotetramer of two MnmE and two MnmG subunits. FAD serves as cofactor.

The protein resides in the cytoplasm. Functionally, NAD-binding protein involved in the addition of a carboxymethylaminomethyl (cmnm) group at the wobble position (U34) of certain tRNAs, forming tRNA-cmnm(5)s(2)U34. This is tRNA uridine 5-carboxymethylaminomethyl modification enzyme MnmG from Salmonella choleraesuis (strain SC-B67).